A 434-amino-acid chain; its full sequence is MSSAPAAGTASTSRFFKSHVSETDPDIFSAIQKEFGRQQHEIELIASENIVSQAVLDAAGSVLTNKYAEGYPGKRYYGGCQYVDIVEDIAIDRAKKLFNCEFANVQPNSGSQANQGVFNALAQPGDTILGLSLAAGGHLTHGAPVNQSGKWFKAVHYMVKPDSHLIDMDEVRKLAQEHKPRIIIAGGSAYPRKIDFAAFRAIADEVGAIFLVDMAHFAGLVAAGLIPSPFPHAHVVTTTTHKTLRGPRGGMILTNDADIAKKINSAIFPGIQGGPLMHVIAGKAVAFGEALRPDFKVYIKQVMDNARALGEVLVQNGFALVSGGTDTHLVLVDLRPKKLTGTKAEKALGRANITCNKNGIPFDPEKPMVTSGIRLGSPAGTTRGFGVAEFQEIGRLISEVLDGVAKNGEDGNGAVEAAVKAKAIALCDRFPIYA.

(6S)-5,6,7,8-tetrahydrofolate contacts are provided by residues leucine 133 and 137 to 139; that span reads GHL. Lysine 242 carries the N6-(pyridoxal phosphate)lysine modification.

This sequence belongs to the SHMT family. Homodimer. It depends on pyridoxal 5'-phosphate as a cofactor.

The protein resides in the cytoplasm. The catalysed reaction is (6R)-5,10-methylene-5,6,7,8-tetrahydrofolate + glycine + H2O = (6S)-5,6,7,8-tetrahydrofolate + L-serine. Its pathway is one-carbon metabolism; tetrahydrofolate interconversion. It participates in amino-acid biosynthesis; glycine biosynthesis; glycine from L-serine: step 1/1. In terms of biological role, catalyzes the reversible interconversion of serine and glycine with tetrahydrofolate (THF) serving as the one-carbon carrier. This reaction serves as the major source of one-carbon groups required for the biosynthesis of purines, thymidylate, methionine, and other important biomolecules. Also exhibits THF-independent aldolase activity toward beta-hydroxyamino acids, producing glycine and aldehydes, via a retro-aldol mechanism. The sequence is that of Serine hydroxymethyltransferase from Hyphomicrobium methylovorum.